The sequence spans 88 residues: Small ribosomal subunit protein bS16 (88 aa).

Belongs to the bacterial ribosomal protein bS16 family.

The polypeptide is Small ribosomal subunit protein bS16 (Pelotomaculum thermopropionicum (strain DSM 13744 / JCM 10971 / SI)).